The primary structure comprises 525 residues: Phosphatidylinositol 4-kinase alpha 2 (525 aa).

Residues 163-278 (SDVRQHIVDG…VKPQACIFKV (116 aa)) are pleckstrin homology (PH) domain conferring phosphoinositide binding specificity. Positions 239-509 (VDSGIPLQSA…VCTDAYNKWT (271 aa)) constitute a PI3K/PI4K catalytic domain. Residues 245–251 (LQSAAKV) are G-loop. The segment at 373–381 (QPKDRHNGN) is catalytic loop. Positions 392–417 (HIDFGFILETSPGGNMRFENAHFKLS) are activation loop.

This sequence belongs to the PI3/PI4-kinase family. Type III PI4K subfamily.

The protein localises to the membrane. The enzyme catalyses a 1,2-diacyl-sn-glycero-3-phospho-(1D-myo-inositol) + ATP = a 1,2-diacyl-sn-glycero-3-phospho-(1D-myo-inositol 4-phosphate) + ADP + H(+). Functionally, acts on phosphatidylinositol (PtdIns) in the first committed step in the production of the second messenger inositol-1,4,5,-trisphosphate. The polypeptide is Phosphatidylinositol 4-kinase alpha 2 (PI4KA2) (Arabidopsis thaliana (Mouse-ear cress)).